The chain runs to 763 residues: Thyrotropin receptor (763 aa).

A signal peptide spans 1–21; that stretch reads MRPTPLLRLALFLVLPSSLGG. Residues 22-412 are Extracellular-facing; the sequence is ERCPSPPCEC…EFNPCEDIMG (391 aa). A disulfide bond links Cys-31 and Cys-41. An LRR 1 repeat occupies 51–74; it reads PPSTQTLKFIETHLKTIPSRAFSN. N-linked (GlcNAc...) asparagine glycosylation is found at Asn-77 and Asn-99. 5 LRR repeats span residues 125-150, 151-174, 176-199, 201-223, and 225-248; these read LPLLKFLGIFNTGLRVFPDLTKIYST, DVFFILEITDNPYMTSIPANAFQG, CNETLTLKLYNNGFTSIQGHAFNG, KLDAVYLNKNKYLTVIGQDAFAG, and YSGPTLLDISYTSVTALPSKGLEH. Asn-177 and Asn-198 each carry an N-linked (GlcNAc...) asparagine glycan. Asn-302 is a glycosylation site (N-linked (GlcNAc...) asparagine). The residue at position 384 (Tyr-384) is a Sulfotyrosine. A helical membrane pass occupies residues 413-440; that stretch reads YKFLRIVVWFVSLLALLGNVFVLVILLT. Topologically, residues 441-449 are cytoplasmic; it reads SHYKLTVPR. A helical membrane pass occupies residues 450-472; that stretch reads FLMCNLAFADFCMGLYLLLIASV. Over 473–493 the chain is Extracellular; the sequence is DLYTQSEYYNHAIDWQTGPGC. Residues Cys-493 and Cys-568 are joined by a disulfide bond. A helical membrane pass occupies residues 494-516; the sequence is NTAGFFTVFASELSVYTLTVITL. Residues 517–536 lie on the Cytoplasmic side of the membrane; that stretch reads ERWHAITFAMRLDRKIRLWH. The chain crosses the membrane as a helical span at residues 537–559; it reads AYVIMLGGWVCCFLLALLPLVGI. Residues 560 to 579 lie on the Extracellular side of the membrane; that stretch reads SSYAKVSICLPMDTETPLAL. A helical membrane pass occupies residues 580-601; it reads AYIILVLLLNIIAFIIVCACYV. Residues 602–624 lie on the Cytoplasmic side of the membrane; sequence KIYITVRNPHYNPGDKDTRIAKR. The chain crosses the membrane as a helical span at residues 625 to 648; it reads MAVLIFTDFMCMAPISFYALSALM. Topologically, residues 649 to 659 are extracellular; it reads NKPLITVTNSK. A helical membrane pass occupies residues 660 to 681; the sequence is ILLVLFYPLNSCANPFLYAIFT. Residues 682 to 763 lie on the Cytoplasmic side of the membrane; that stretch reads KAFQRDVFML…TSKEYKRTVL (82 aa). Residues 742-763 form a disordered region; the sequence is ENSHLTPKQQDQTSKEYKRTVL. Positions 744–753 are enriched in polar residues; the sequence is SHLTPKQQDQ. Basic and acidic residues predominate over residues 754 to 763; it reads TSKEYKRTVL. Positions 761–763 match the PDZ-binding motif; the sequence is TVL.

This sequence belongs to the G-protein coupled receptor 1 family. FSH/LSH/TSH subfamily. Interacts with heterodimer GPHA2:GPHB5; this interaction stimulates cAMP production. Interacts (via the PDZ-binding motif) with SCRIB; regulates TSHR trafficking and function. Glycosylated. In terms of processing, sulfated. Sulfation on Tyr-384 plays a role in thyrotropin receptor binding and activation.

It localises to the cell membrane. The protein localises to the basolateral cell membrane. In terms of biological role, receptor for the thyroid-stimulating hormone (TSH) or thyrotropin. Also acts as a receptor for the heterodimeric glycoprotein hormone (GPHA2:GPHB5) or thyrostimulin. The activity of this receptor is mediated by G proteins which activate adenylate cyclase. Plays a central role in controlling thyroid cell metabolism. This Bos taurus (Bovine) protein is Thyrotropin receptor (TSHR).